The sequence spans 284 residues: ASC1-like protein 3 (284 aa).

6 consecutive transmembrane segments (helical) span residues 9 to 29, 69 to 89, 108 to 128, 148 to 168, 195 to 215, and 243 to 263; these read SSFF…RFFL, LTYY…EPWS, LMLF…ALVA, ILIG…ILAL, FGLF…FWII, and MLLT…LMIM. The region spanning 60-267 is the TLC domain; the sequence is VKFSESIWKL…ICLMIMKQLN (208 aa).

It localises to the endoplasmic reticulum membrane. Mediates resistance to sphinganine-analog mycotoxins (SAMs) by restoring the sphingolipid biosynthesis. Could salvage the transport of GPI-anchored proteins from the endoplasmic reticulum to the Golgi apparatus in ceramides-depleted cells after SAM exposure. This chain is ASC1-like protein 3, found in Oryza sativa subsp. japonica (Rice).